Here is a 138-residue protein sequence, read N- to C-terminus: Basic phospholipase A2 DAV-N6 (138 aa).

The signal sequence occupies residues 1–16 (MRTLWIVAVLLVSVEG). 7 disulfides stabilise this stretch: Cys42/Cys131, Cys44/Cys60, Cys59/Cys111, Cys65/Cys138, Cys66/Cys104, Cys73/Cys97, and Cys91/Cys102. The Ca(2+) site is built by Tyr43, Gly45, and Gly47. Residue His63 is part of the active site. Asp64 provides a ligand contact to Ca(2+). Asp105 is an active-site residue.

Requires Ca(2+) as cofactor. As to expression, expressed by the venom gland.

It localises to the secreted. It carries out the reaction a 1,2-diacyl-sn-glycero-3-phosphocholine + H2O = a 1-acyl-sn-glycero-3-phosphocholine + a fatty acid + H(+). Functionally, snake venom phospholipase A2 (PLA2) that inhibits neuromuscular transmission by blocking acetylcholine release from the nerve termini. PLA2 catalyzes the calcium-dependent hydrolysis of the 2-acyl groups in 3-sn-phosphoglycerides. The polypeptide is Basic phospholipase A2 DAV-N6 (Deinagkistrodon acutus (Hundred-pace snake)).